The following is a 37-amino-acid chain: GIFSLVKGVAKLAGKTLAKEGGKFGLELAMCKIAKQC.

Residues cysteine 31 and cysteine 37 are joined by a disulfide bond.

Expressed by the skin glands.

It localises to the secreted. Antimicrobial peptide. This chain is Esculentin-2Rb, found in Pelophylax ridibundus (Marsh frog).